The following is a 380-amino-acid chain: ATPase ASNA1 homolog (380 aa).

Lysine 48–threonine 55 is a binding site for ATP. Aspartate 77 is an active-site residue. The ATP site is built by glutamate 248 and asparagine 275.

It belongs to the arsA ATPase family. As to quaternary structure, homodimer.

It is found in the cytoplasm. The protein resides in the endoplasmic reticulum. Its function is as follows. ATPase required for the post-translational delivery of tail-anchored (TA) proteins to the endoplasmic reticulum. Recognizes and selectively binds the transmembrane domain of TA proteins in the cytosol. This complex then targets to the endoplasmic reticulum by membrane-bound receptors, where the tail-anchored protein is released for insertion. This process is regulated by ATP binding and hydrolysis. ATP binding drives the homodimer towards the closed dimer state, facilitating recognition of newly synthesized TA membrane proteins. ATP hydrolysis is required for insertion. Subsequently, the homodimer reverts towards the open dimer state, lowering its affinity for the membrane-bound receptor, and returning it to the cytosol to initiate a new round of targeting. The chain is ATPase ASNA1 homolog from Plasmodium yoelii yoelii.